The following is a 400-amino-acid chain: Large envelope protein (400 aa).

At Met1 the chain carries N-acetylmethionine. Disordered stretches follow at residues 1-55 (MGGW…WPEA) and 85-118 (LTTV…SHPQ). The N-myristoyl glycine; by host moiety is linked to residue Gly2. Residues 2–119 (GGWSSKPRQG…PPLRDSHPQA (118 aa)) form a pre-S1 region. A pre-S region spans residues 2–174 (GGWSSKPRQG…FSRTGDPAPN (173 aa)). Over 2–181 (GGWSSKPRQG…APNMESTTSG (180 aa)) the chain is Virion surface; in external conformation. Topologically, residues 2-253 (GGWSSKPRQG…PGYRWMCLRR (252 aa)) are intravirion; in internal conformation. An N-linked (GlcNAc...) asparagine glycan is attached at Trp4. Over residues 96–106 (STNRQSGRQPT) the composition is skewed to polar residues. The pre-S2 stretch occupies residues 120–174 (MQWNSTTFHQALLDPRVKGLYFPAGGSSSGTVNPVPTTASPISSIFSRTGDPAPN). Residues 182-202 (FLGPLLVLQAGFFLLTRILTI) traverse the membrane as a helical segment. The Intravirion; in external conformation segment spans residues 203–253 (PQSLDSWWTSLNFLGGAPTCPGQNSQSPTSNHSPTSCPPICPGYRWMCLRR). The helical transmembrane segment at 254 to 274 (FIIFLFILLLCLIFLLVLLDF) threads the bilayer. Over 275–348 (QGMLPVCPLL…WASVRFSWLS (74 aa)) the chain is Virion surface. An N-linked (GlcNAc...) asparagine; by host glycan is attached at Asn320. Residues 349–369 (LLVPFVQWFAGLSPTVWLSVI) form a helical membrane-spanning segment. Residues 370–375 (WMMWYW) lie on the Intravirion side of the membrane. The chain crosses the membrane as a helical span at residues 376–398 (GPSLYNILSPFLPLLPIFFCLWV). At 399 to 400 (YI) the chain is on the virion surface side.

It belongs to the orthohepadnavirus major surface antigen family. In its internal form (Li-HBsAg), interacts with the capsid protein and with the isoform S. Interacts with host chaperone CANX. In terms of assembly, associates with host chaperone CANX through its pre-S2 N glycan; this association may be essential for isoform M proper secretion. As to quaternary structure, interacts with isoform L. Interacts with the antigens of satellite virus HDV (HDVAgs); this interaction is required for encapsidation of HDV genomic RNA. Post-translationally, isoform M is N-terminally acetylated by host at a ratio of 90%, and N-glycosylated by host at the pre-S2 region. Myristoylated.

It localises to the virion membrane. The large envelope protein exists in two topological conformations, one which is termed 'external' or Le-HBsAg and the other 'internal' or Li-HBsAg. In its external conformation the protein attaches the virus to cell receptors and thereby initiating infection. This interaction determines the species specificity and liver tropism. This attachment induces virion internalization predominantly through caveolin-mediated endocytosis. The large envelope protein also assures fusion between virion membrane and endosomal membrane. In its internal conformation the protein plays a role in virion morphogenesis and mediates the contact with the nucleocapsid like a matrix protein. Functionally, the middle envelope protein plays an important role in the budding of the virion. It is involved in the induction of budding in a nucleocapsid independent way. In this process the majority of envelope proteins bud to form subviral lipoprotein particles of 22 nm of diameter that do not contain a nucleocapsid. The protein is Large envelope protein of Hepatitis B virus genotype C subtype ar (isolate Japan/S-207/1988) (HBV-C).